Consider the following 264-residue polypeptide: 3-methyl-2-oxobutanoate hydroxymethyltransferase (264 aa).

Residues D45 and D84 each contribute to the Mg(2+) site. 3-methyl-2-oxobutanoate is bound by residues 45–46 (DS), D84, and K112. Mg(2+) is bound at residue E114. The active-site Proton acceptor is the E181.

The protein belongs to the PanB family. Homodecamer; pentamer of dimers. Mg(2+) is required as a cofactor.

It localises to the cytoplasm. It catalyses the reaction 3-methyl-2-oxobutanoate + (6R)-5,10-methylene-5,6,7,8-tetrahydrofolate + H2O = 2-dehydropantoate + (6S)-5,6,7,8-tetrahydrofolate. Its pathway is cofactor biosynthesis; (R)-pantothenate biosynthesis; (R)-pantoate from 3-methyl-2-oxobutanoate: step 1/2. Its function is as follows. Catalyzes the reversible reaction in which hydroxymethyl group from 5,10-methylenetetrahydrofolate is transferred onto alpha-ketoisovalerate to form ketopantoate. This is 3-methyl-2-oxobutanoate hydroxymethyltransferase from Aeromonas salmonicida (strain A449).